The following is an 847-amino-acid chain: Leucine--tRNA ligase (847 aa).

Residues 41-51 (PYPSGRIHMGH) carry the 'HIGH' region motif. Residues 619–623 (KMSKS) carry the 'KMSKS' region motif. Lys-622 is a binding site for ATP.

The protein belongs to the class-I aminoacyl-tRNA synthetase family.

The protein resides in the cytoplasm. It carries out the reaction tRNA(Leu) + L-leucine + ATP = L-leucyl-tRNA(Leu) + AMP + diphosphate. This chain is Leucine--tRNA ligase, found in Cereibacter sphaeroides (strain KD131 / KCTC 12085) (Rhodobacter sphaeroides).